The chain runs to 193 residues: Phosphoheptose isomerase (193 aa).

Residues 37-193 (LANAFKAGGK…QLIEKEMADQ (157 aa)) enclose the SIS domain. A substrate-binding site is contributed by 52–54 (NGG). Zn(2+)-binding residues include His-61 and Glu-65. Substrate is bound by residues Glu-65, 93–94 (ND), 119–121 (STS), Ser-124, and Gln-172. Residues Gln-172 and His-180 each contribute to the Zn(2+) site.

This sequence belongs to the SIS family. GmhA subfamily. In terms of assembly, homotetramer. The cofactor is Zn(2+).

The protein resides in the cytoplasm. It catalyses the reaction 2 D-sedoheptulose 7-phosphate = D-glycero-alpha-D-manno-heptose 7-phosphate + D-glycero-beta-D-manno-heptose 7-phosphate. The protein operates within carbohydrate biosynthesis; D-glycero-D-manno-heptose 7-phosphate biosynthesis; D-glycero-alpha-D-manno-heptose 7-phosphate and D-glycero-beta-D-manno-heptose 7-phosphate from sedoheptulose 7-phosphate: step 1/1. Its function is as follows. Catalyzes the isomerization of sedoheptulose 7-phosphate in D-glycero-D-manno-heptose 7-phosphate. The protein is Phosphoheptose isomerase of Pectobacterium atrosepticum (strain SCRI 1043 / ATCC BAA-672) (Erwinia carotovora subsp. atroseptica).